The primary structure comprises 212 residues: Ribosomal RNA large subunit methyltransferase E (212 aa).

S-adenosyl-L-methionine-binding residues include G57, W59, D77, D93, and D122. Catalysis depends on K162, which acts as the Proton acceptor.

This sequence belongs to the class I-like SAM-binding methyltransferase superfamily. RNA methyltransferase RlmE family.

It localises to the cytoplasm. The catalysed reaction is uridine(2552) in 23S rRNA + S-adenosyl-L-methionine = 2'-O-methyluridine(2552) in 23S rRNA + S-adenosyl-L-homocysteine + H(+). Functionally, specifically methylates the uridine in position 2552 of 23S rRNA at the 2'-O position of the ribose in the fully assembled 50S ribosomal subunit. In Coxiella burnetii (strain CbuK_Q154) (Coxiella burnetii (strain Q154)), this protein is Ribosomal RNA large subunit methyltransferase E.